The sequence spans 150 residues: UPF0756 membrane protein HDEF_0364 (150 aa).

A run of 5 helical transmembrane segments spans residues 1 to 21 (MMFF…GLIS), 28 to 48 (ISVV…FPWV), 51 to 71 (YALK…IASG), 88 to 108 (ILGI…VSLM), and 123 to 143 (ILGV…AGLL).

The protein belongs to the UPF0756 family.

It is found in the cell membrane. The sequence is that of UPF0756 membrane protein HDEF_0364 from Hamiltonella defensa subsp. Acyrthosiphon pisum (strain 5AT).